Consider the following 270-residue polypeptide: Aliphatic sulfonates import ATP-binding protein SsuB (270 aa).

Positions 17 to 238 constitute an ABC transporter domain; it reads LASKGLRKTF…ARGSHRLAAL (222 aa). 49 to 56 lines the ATP pocket; it reads GRSGCGKS. The tract at residues 248–270 is disordered; that stretch reads STPGTAPEPDPVAPLPTQLRWAH.

Belongs to the ABC transporter superfamily. Aliphatic sulfonates importer (TC 3.A.1.17.2) family. In terms of assembly, the complex is composed of two ATP-binding proteins (SsuB), two transmembrane proteins (SsuC) and a solute-binding protein (SsuA).

Its subcellular location is the cell inner membrane. It carries out the reaction ATP + H2O + aliphatic sulfonate-[sulfonate-binding protein]Side 1 = ADP + phosphate + aliphatic sulfonateSide 2 + [sulfonate-binding protein]Side 1.. Functionally, part of the ABC transporter complex SsuABC involved in aliphatic sulfonates import. Responsible for energy coupling to the transport system. The sequence is that of Aliphatic sulfonates import ATP-binding protein SsuB from Pseudomonas putida (strain ATCC 47054 / DSM 6125 / CFBP 8728 / NCIMB 11950 / KT2440).